The sequence spans 62 residues: Small ribosomal subunit protein eS27 (62 aa).

The Zn(2+) site is built by cysteine 17, cysteine 20, cysteine 36, and cysteine 39. The C4-type zinc finger occupies 17-39 (CPDCENEQIIFEKASTVVDCVVC).

Belongs to the eukaryotic ribosomal protein eS27 family. Part of the 30S ribosomal subunit. Zn(2+) is required as a cofactor.

The polypeptide is Small ribosomal subunit protein eS27 (Methanosphaerula palustris (strain ATCC BAA-1556 / DSM 19958 / E1-9c)).